The primary structure comprises 621 residues: Chaperone protein DnaK (621 aa).

At Thr202 the chain carries Phosphothreonine; by autocatalysis. Positions 596 to 621 are disordered; it reads SQFAQAAKQNEEKKEEDKKDSEESKN. Positions 604–621 are enriched in basic and acidic residues; that stretch reads QNEEKKEEDKKDSEESKN.

It belongs to the heat shock protein 70 family.

In terms of biological role, acts as a chaperone. The sequence is that of Chaperone protein DnaK from Malacoplasma penetrans (strain HF-2) (Mycoplasma penetrans).